The chain runs to 324 residues: Large ribosomal subunit protein uL3m (324 aa).

The transit peptide at 1–41 (MAAVPRGLLSRINQFLSIRSITPSSSESLPHCSSFFLIRRF) directs the protein to the mitochondrion. The disordered stretch occupies residues 206–229 (PASHGASLSHRSGGSTGQRDAPGK).

Belongs to the universal ribosomal protein uL3 family. In terms of assembly, part of the 50S ribosomal subunit.

The protein localises to the mitochondrion. In terms of biological role, one of the primary rRNA binding proteins, it binds directly near the 3'-end of the 23S rRNA, where it nucleates assembly of the 50S subunit. The chain is Large ribosomal subunit protein uL3m from Arabidopsis thaliana (Mouse-ear cress).